The sequence spans 391 residues: 3-ketoacyl-CoA thiolase (391 aa).

The active-site Acyl-thioester intermediate is C90. Residues H347 and C377 each act as proton acceptor in the active site.

It belongs to the thiolase-like superfamily. Thiolase family.

It carries out the reaction an acyl-CoA + acetyl-CoA = a 3-oxoacyl-CoA + CoA. It functions in the pathway lipid metabolism; fatty acid beta-oxidation. Involved in the degradation of long-chain fatty acids. In Bacillus subtilis (strain 168), this protein is 3-ketoacyl-CoA thiolase (fadA).